A 360-amino-acid polypeptide reads, in one-letter code: Ribosomal RNA large subunit methyltransferase M (360 aa).

Residues S187, 220–223 (CPGG), D239, D259, and D276 contribute to the S-adenosyl-L-methionine site. Residue K305 is the Proton acceptor of the active site.

The protein belongs to the class I-like SAM-binding methyltransferase superfamily. RNA methyltransferase RlmE family. RlmM subfamily. As to quaternary structure, monomer.

It is found in the cytoplasm. The catalysed reaction is cytidine(2498) in 23S rRNA + S-adenosyl-L-methionine = 2'-O-methylcytidine(2498) in 23S rRNA + S-adenosyl-L-homocysteine + H(+). Its function is as follows. Catalyzes the 2'-O-methylation at nucleotide C2498 in 23S rRNA. In Photobacterium profundum (strain SS9), this protein is Ribosomal RNA large subunit methyltransferase M.